The sequence spans 993 residues: Mediator of RNA polymerase II transcription subunit 24 (993 aa).

Phosphoserine occurs at positions 827 and 829.

Belongs to the Mediator complex subunit 24 family. In terms of assembly, component of the Mediator complex, which includes at least CDK8, MED4, MED6, MED11, MED14, MED17, MED18, MED20, MED21, MED22, MED27, MED28, MED30 and MED31.

It is found in the nucleus. Component of the Mediator complex, a coactivator involved in the regulated transcription of nearly all RNA polymerase II-dependent genes. Mediator functions as a bridge to convey information from gene-specific regulatory proteins to the basal RNA polymerase II transcription machinery. Mediator is recruited to promoters by direct interactions with regulatory proteins and serves as a scaffold for the assembly of a functional preinitiation complex with RNA polymerase II and the general transcription factors. Required for activated transcription of the MtnA, MtnB and MtnD genes. The protein is Mediator of RNA polymerase II transcription subunit 24 (MED24) of Drosophila melanogaster (Fruit fly).